The chain runs to 193 residues: Adenylate kinase (193 aa).

Gly-11–Thr-16 lines the ATP pocket. Positions Ser-31–Val-60 are NMP. AMP contacts are provided by residues Thr-32, Arg-37, Glu-58–Val-60, Gly-85–Arg-88, and Gln-92. An LID region spans residues Ala-126–Asp-136. Arg-127 contributes to the ATP binding site. AMP is bound by residues Arg-133 and Arg-145. Residue Gln-173 participates in ATP binding.

Belongs to the adenylate kinase family. As to quaternary structure, monomer.

It localises to the cytoplasm. The enzyme catalyses AMP + ATP = 2 ADP. It functions in the pathway purine metabolism; AMP biosynthesis via salvage pathway; AMP from ADP: step 1/1. Its function is as follows. Catalyzes the reversible transfer of the terminal phosphate group between ATP and AMP. Plays an important role in cellular energy homeostasis and in adenine nucleotide metabolism. In Synechococcus sp. (strain JA-2-3B'a(2-13)) (Cyanobacteria bacterium Yellowstone B-Prime), this protein is Adenylate kinase.